The sequence spans 336 residues: D-alanine--D-alanine ligase (336 aa).

The ATP-grasp domain maps to 124–330 (KMWFSALGIP…FTQYLSLVIN (207 aa)). Position 154-209 (154-209 (ALEKWGSIFVKAASQGSSVGCYKVDEASKVLGVLKDAFGYAPYVIVEKTIKARELE)) interacts with ATP. Mg(2+) contacts are provided by Asp-284, Glu-297, and Asn-299.

The protein belongs to the D-alanine--D-alanine ligase family. The cofactor is Mg(2+). Mn(2+) serves as cofactor.

The protein localises to the cytoplasm. It catalyses the reaction 2 D-alanine + ATP = D-alanyl-D-alanine + ADP + phosphate + H(+). It participates in cell wall biogenesis; peptidoglycan biosynthesis. Functionally, cell wall formation. The chain is D-alanine--D-alanine ligase from Shewanella oneidensis (strain ATCC 700550 / JCM 31522 / CIP 106686 / LMG 19005 / NCIMB 14063 / MR-1).